The following is an 867-amino-acid chain: Probable potassium transporter 15 (867 aa).

Residues 1 to 13 are compositionally biased toward low complexity; that stretch reads MAASSSSSASASA. The disordered stretch occupies residues 1-88; that stretch reads MAASSSSSAS…EGEGEDGEKQ (88 aa). Topologically, residues 1 to 124 are cytoplasmic; sequence MAASSSSSAS…DSEEFDFGRT (124 aa). Acidic residues predominate over residues 32–44; it reads TEEDDEGEEDGDT. Positions 45 to 54 are enriched in low complexity; the sequence is VEAAAAAVGA. Acidic residues predominate over residues 63 to 84; sequence SEEEEDEEDGGGGGEGEGEGED. Residues 125-145 traverse the membrane as a helical segment; sequence MFLALQTLAVVFGDIGISPLY. Residues 146–167 lie on the Extracellular side of the membrane; that stretch reads TFDVMFSKYPILGEEDVLGALS. Residues 168 to 188 form a helical membrane-spanning segment; the sequence is LVLYTLISMPLVKYVLVVLWA. The Cytoplasmic portion of the chain corresponds to 189 to 252; it reads NDDGEGGIFA…KLESSLLLKK (64 aa). Residues 253–273 form a helical membrane-spanning segment; the sequence is LLLGLVLFGTAMFISNGVITP. Over 274–285 the chain is Extracellular; sequence AMSVLSAVSGLK. A helical membrane pass occupies residues 286–306; it reads VGIPNASQGLVVMISVVLLVI. Over 307-317 the chain is Cytoplasmic; it reads LYSVQRYATSK. The chain crosses the membrane as a helical span at residues 318 to 338; the sequence is MGFALGPSLLIWFCCLGGIGI. The Extracellular segment spans residues 339–365; the sequence is YNLSTYGPAAFKAFNPLYIIYYFGRNP. Asn340 carries an N-linked (GlcNAc...) asparagine glycan. Residues 366–386 traverse the membrane as a helical segment; that stretch reads FQAWLSLAGCLLCATGSEAIF. Residues 387-400 lie on the Cytoplasmic side of the membrane; that stretch reads ANLSYFPVRYVQSM. The chain crosses the membrane as a helical span at residues 401–421; that stretch reads FALLVLPCLVLAYLGQGAFLI. The Extracellular portion of the chain corresponds to 422–433; it reads ANQNSSEQIFFS. Residue Asn425 is glycosylated (N-linked (GlcNAc...) asparagine). A helical membrane pass occupies residues 434 to 454; the sequence is SIPSGVFWPVFLIANLAALIA. Topologically, residues 455 to 490 are cytoplasmic; sequence SRTMTTAIFQCLKQSIALGCFPRLKIIHTSRKFMAK. The chain crosses the membrane as a helical span at residues 491–511; it reads IYIPVVNWFLLFSCLGFILLF. The Extracellular segment spans residues 512–522; that stretch reads RSIYDVGNAYA. Residues 523–543 traverse the membrane as a helical segment; sequence IAELGVMIMATVYVTIIMLLI. Over 544-545 the chain is Cytoplasmic; sequence WE. Residues 546-566 form a helical membrane-spanning segment; sequence TSIVKVLSFVITFLSLELVFF. Topologically, residues 567 to 572 are extracellular; the sequence is SSSLSS. Residues 573–593 traverse the membrane as a helical segment; sequence VGDGGWALIIFASGILMVMFI. At 594–867 the chain is on the cytoplasmic side; that stretch reads WNYGSKLKYD…VMQVRLTSYV (274 aa).

It belongs to the HAK/KUP transporter (TC 2.A.72.3) family.

The protein resides in the membrane. Functionally, high-affinity potassium transporter. The chain is Probable potassium transporter 15 (HAK15) from Oryza sativa subsp. japonica (Rice).